The chain runs to 192 residues: Fe/S biogenesis protein NfuA (192 aa).

[4Fe-4S] cluster is bound by residues Cys149 and Cys152.

Belongs to the NfuA family. Homodimer. It depends on [4Fe-4S] cluster as a cofactor.

Its function is as follows. Involved in iron-sulfur cluster biogenesis. Binds a 4Fe-4S cluster, can transfer this cluster to apoproteins, and thereby intervenes in the maturation of Fe/S proteins. Could also act as a scaffold/chaperone for damaged Fe/S proteins. In Shewanella oneidensis (strain ATCC 700550 / JCM 31522 / CIP 106686 / LMG 19005 / NCIMB 14063 / MR-1), this protein is Fe/S biogenesis protein NfuA.